The primary structure comprises 501 residues: Pentatricopeptide repeat-containing protein At2g36730 (501 aa).

9 PPR repeats span residues 77 to 111 (TPST…GIKP), 112 to 146 (NKLT…GFDF), 147 to 177 (DVYV…MTER), 178 to 212 (NVVS…RFCP), 213 to 243 (DETT…VREL), 246 to 276 (NCRL…MVDK), 277 to 312 (NVWT…SVRP), 313 to 343 (NYVT…MEKI), and 349 to 379 (MMIH…MPFE). A type E motif region spans residues 384 to 462 (VWRTLLSACS…IAGESCLELG (79 aa)). A type E(+) motif region spans residues 463-493 (GSFHRFFSGYDPRSEYVSIYELLDLFKFQLT).

The protein belongs to the PPR family. PCMP-E subfamily.

The sequence is that of Pentatricopeptide repeat-containing protein At2g36730 (PCMP-E44) from Arabidopsis thaliana (Mouse-ear cress).